The chain runs to 288 residues: ATP synthase gamma chain (288 aa).

Belongs to the ATPase gamma chain family. As to quaternary structure, F-type ATPases have 2 components, CF(1) - the catalytic core - and CF(0) - the membrane proton channel. CF(1) has five subunits: alpha(3), beta(3), gamma(1), delta(1), epsilon(1). CF(0) has three main subunits: a, b and c.

It is found in the cell membrane. Produces ATP from ADP in the presence of a proton gradient across the membrane. The gamma chain is believed to be important in regulating ATPase activity and the flow of protons through the CF(0) complex. This is ATP synthase gamma chain from Staphylococcus aureus (strain bovine RF122 / ET3-1).